Reading from the N-terminus, the 312-residue chain is tRNA dimethylallyltransferase (312 aa).

Residue 15–22 (GPTAAGKS) coordinates ATP. 17 to 22 (TAAGKS) provides a ligand contact to substrate. The interaction with substrate tRNA stretch occupies residues 40–43 (DSMQ).

This sequence belongs to the IPP transferase family. As to quaternary structure, monomer. It depends on Mg(2+) as a cofactor.

It carries out the reaction adenosine(37) in tRNA + dimethylallyl diphosphate = N(6)-dimethylallyladenosine(37) in tRNA + diphosphate. Its function is as follows. Catalyzes the transfer of a dimethylallyl group onto the adenine at position 37 in tRNAs that read codons beginning with uridine, leading to the formation of N6-(dimethylallyl)adenosine (i(6)A). The protein is tRNA dimethylallyltransferase of Streptomyces avermitilis (strain ATCC 31267 / DSM 46492 / JCM 5070 / NBRC 14893 / NCIMB 12804 / NRRL 8165 / MA-4680).